We begin with the raw amino-acid sequence, 61 residues long: Small ribosomal subunit protein uS14 (61 aa).

4 residues coordinate Zn(2+): Cys-24, Cys-27, Cys-40, and Cys-43.

The protein belongs to the universal ribosomal protein uS14 family. Zinc-binding uS14 subfamily. In terms of assembly, part of the 30S ribosomal subunit. Contacts proteins S3 and S10. Requires Zn(2+) as cofactor.

Binds 16S rRNA, required for the assembly of 30S particles and may also be responsible for determining the conformation of the 16S rRNA at the A site. This chain is Small ribosomal subunit protein uS14, found in Ruminiclostridium cellulolyticum (strain ATCC 35319 / DSM 5812 / JCM 6584 / H10) (Clostridium cellulolyticum).